The chain runs to 158 residues: Small ribosomal subunit protein uS9 (158 aa).

It belongs to the universal ribosomal protein uS9 family.

The polypeptide is Small ribosomal subunit protein uS9 (Nitrobacter winogradskyi (strain ATCC 25391 / DSM 10237 / CIP 104748 / NCIMB 11846 / Nb-255)).